The primary structure comprises 118 residues: Large ribosomal subunit protein bL20 (118 aa).

This sequence belongs to the bacterial ribosomal protein bL20 family.

Binds directly to 23S ribosomal RNA and is necessary for the in vitro assembly process of the 50S ribosomal subunit. It is not involved in the protein synthesizing functions of that subunit. The chain is Large ribosomal subunit protein bL20 from Bacillus cytotoxicus (strain DSM 22905 / CIP 110041 / 391-98 / NVH 391-98).